Consider the following 766-residue polypeptide: Discoidin domain-containing receptor A (766 aa).

Positions 1 to 18 (MQIALVLLAIYGTTTTNT) are cleaved as a signal peptide. Residues 19-372 (LRIDQCGENA…PPSSAATQQL (354 aa)) are Extracellular-facing. 2 consecutive F5/8 type C domains span residues 24–180 (CGEN…IHGC) and 195–351 (SRLD…FTSA). A disulfide bridge links Cys-24 with Cys-180. N-linked (GlcNAc...) asparagine glycosylation is found at Asn-87, Asn-103, Asn-129, Asn-242, Asn-268, Asn-311, and Asn-353. Residues 373–393 (LVVCGIIFLTIFACVAYCVSV) form a helical membrane-spanning segment. Over 394 to 766 (CLKRRQKNKS…FERLVKPFQD (373 aa)) the chain is Cytoplasmic. The disordered stretch occupies residues 475-501 (NFPPPPEGREEHTYSQPVSPENSSNGS). Over residues 488–501 (YSQPVSPENSSNGS) the composition is skewed to polar residues. Positions 519-766 (LLIGKAIGEG…FERLVKPFQD (248 aa)) constitute a Protein kinase domain. ATP is bound by residues 525 to 533 (IGEGKFTMI) and Lys-547.

It belongs to the protein kinase superfamily. Tyr protein kinase family. Insulin receptor subfamily. Expressed in neurons in head and tail, some motoneurons in ventral nerve cord, in PVP interneurons, pharynx and stomato-intestinal muscle.

The protein localises to the cell membrane. It localises to the cell projection. It is found in the axon. Its subcellular location is the perikaryon. Receptor which, together with svh-4, is involved in axon guidance to establish the tracts for the ventral and dorsal nerve cords during nervous system development. May play a role in axon regeneration following injury in D-type motor neurons. The chain is Discoidin domain-containing receptor A from Caenorhabditis elegans.